The chain runs to 718 residues: Protein Hook homolog 3 (718 aa).

N-acetylmethionine is present on Met1. Residues Met1 to Val164 are sufficient for interaction with microtubules. Position 6 is a phosphoserine (Ser6). In terms of domain architecture, Calponin-homology (CH) spans Val10–Ala126. 2 coiled-coil regions span residues His168–Gln433 and Glu462–Lys663. Residue Ser238 is modified to Phosphoserine. A sufficient for interaction with IIGP1 region spans residues Ser450–Asn671. The segment at Glu553 to Arg718 is required for association with Golgi. The disordered stretch occupies residues Glu682–Arg718. Polar residues predominate over residues Ser687–Arg706. Residues Ser693 and Ser707 each carry the phosphoserine modification.

The protein belongs to the hook family. Self-associates. Component of the FTS/Hook/FHIP complex (FHF complex), composed of AKTIP/FTS, FHIP1B, and one or more members of the Hook family of proteins HOOK1, HOOK2, and HOOK3. May interact directly with AKTIP/FTS, HOOK1 and HOOK2. Associates with several subunits of the homotypic vesicular sorting complex (the HOPS complex) including VPS16 and VPS41; these interactions may be indirect. Interacts with IIGP1. Interacts with MSR1, and this association is stimulated by ligand binding to MSR1. Interacts with microtubules. Part of a tripartite complex with dynein and dynactin, acts an adapter linking the dynein motor complex and dynactin. Interacts with dynein intermediate chain and dynactin (DCTN1). Interacts with CCDC181. Interacts with LRGUK. As to quaternary structure, (Microbial infection) Interacts with Salmonella typhimurium spiC. As to expression, expressed in brain, cerebellum, heart, intestine, kidney, liver, lung, skeletal muscle, spleen and stomach (at protein level).

It localises to the cytoplasm. The protein localises to the cytoskeleton. It is found in the golgi apparatus. Acts as an adapter protein linking the dynein motor complex to various cargos and converts dynein from a non-processive to a highly processive motor in the presence of dynactin. Facilitates the interaction between dynein and dynactin and activates dynein processivity (the ability to move along a microtubule for a long distance without falling off the track). Predominantly recruits 2 dyneins, which increases both the force and speed of the microtubule motor. Component of the FTS/Hook/FHIP complex (FHF complex). The FHF complex may function to promote vesicle trafficking and/or fusion via the homotypic vesicular protein sorting complex (the HOPS complex). May regulate clearance of endocytosed receptors such as MSR1. Participates in defining the architecture and localization of the Golgi complex. FHF complex promotes the distribution of AP-4 complex to the perinuclear area of the cell. Functionally, (Microbial infection) Serves as a target for the spiC protein from Salmonella typhimurium, which inactivates it, leading to a strong alteration in cellular trafficking. The sequence is that of Protein Hook homolog 3 (Hook3) from Mus musculus (Mouse).